Consider the following 461-residue polypeptide: L-cystine uptake protein TcyP (461 aa).

Transmembrane regions (helical) follow at residues 1 to 21 (MTLF…LLYM), 33 to 53 (VFTA…IYGS), 72 to 92 (YVKL…LGAF), 104 to 124 (ISGL…AVGI), 183 to 203 (PTST…YLGV), 224 to 244 (IIMR…LAIM), 262 to 282 (FVIA…LLIT), 337 to 357 (LSIG…IMIA), 369 to 389 (FLFT…GVGG), and 393 to 413 (FAAL…GLLI).

The protein belongs to the dicarboxylate/amino acid:cation symporter (DAACS) (TC 2.A.23) family.

Its subcellular location is the membrane. Functionally, mediates uptake of L-cystine, the oxidized form of L-cysteine. This chain is L-cystine uptake protein TcyP (tcyP), found in Bacillus licheniformis (strain ATCC 14580 / DSM 13 / JCM 2505 / CCUG 7422 / NBRC 12200 / NCIMB 9375 / NCTC 10341 / NRRL NRS-1264 / Gibson 46).